The sequence spans 152 residues: Transcriptional regulator MraZ (152 aa).

2 consecutive SpoVT-AbrB domains span residues 5–52 and 81–124; these read ASAI…PLKE and ATEC…SDAE.

It belongs to the MraZ family. As to quaternary structure, forms oligomers.

The protein localises to the cytoplasm. It localises to the nucleoid. This Pasteurella multocida (strain Pm70) protein is Transcriptional regulator MraZ.